The chain runs to 501 residues: ATP synthase subunit alpha (501 aa).

169–176 (GDRQTGKT) serves as a coordination point for ATP.

Belongs to the ATPase alpha/beta chains family. In terms of assembly, F-type ATPases have 2 components, CF(1) - the catalytic core - and CF(0) - the membrane proton channel. CF(1) has five subunits: alpha(3), beta(3), gamma(1), delta(1), epsilon(1). CF(0) has three main subunits: a(1), b(2) and c(9-12). The alpha and beta chains form an alternating ring which encloses part of the gamma chain. CF(1) is attached to CF(0) by a central stalk formed by the gamma and epsilon chains, while a peripheral stalk is formed by the delta and b chains.

Its subcellular location is the cell membrane. It catalyses the reaction ATP + H2O + 4 H(+)(in) = ADP + phosphate + 5 H(+)(out). Functionally, produces ATP from ADP in the presence of a proton gradient across the membrane. The alpha chain is a regulatory subunit. The chain is ATP synthase subunit alpha from Streptococcus gordonii (strain Challis / ATCC 35105 / BCRC 15272 / CH1 / DL1 / V288).